The following is a 396-amino-acid chain: Acetyl-CoA acetyltransferase ERG10, cytosolic (396 aa).

Cys-91 (acyl-thioester intermediate) is an active-site residue. Tyr-186 is a binding site for K(+). Asn-227 and Lys-230 together coordinate CoA. K(+) is bound by residues Ala-246, Pro-247, and Val-347. Catalysis depends on proton acceptor residues His-351 and Cys-381. Residue Asn-382 participates in chloride binding.

It belongs to the thiolase-like superfamily. Thiolase family. As to quaternary structure, homotetramer. Requires K(+) as cofactor.

It localises to the cytoplasm. The protein resides in the cytosol. The catalysed reaction is 2 acetyl-CoA = acetoacetyl-CoA + CoA. The protein operates within metabolic intermediate biosynthesis; (R)-mevalonate biosynthesis; (R)-mevalonate from acetyl-CoA: step 1/3. Functionally, acetyl-CoA acetyltransferase; part of the first module of ergosterol biosynthesis pathway that includes the early steps of the pathway, conserved across all eukaryotes, and which results in the formation of mevalonate from acetyl-coenzyme A (acetyl-CoA). ERG10B catalyzes the formation of acetoacetyl-CoA from acetyl-CoA. The first module starts with the action of the cytosolic acetyl-CoA acetyltransferase ERG10B that catalyzes the formation of acetoacetyl-CoA. The hydroxymethylglutaryl-CoA synthases ERG13 then condenses acetyl-CoA with acetoacetyl-CoA to form HMG-CoA. The rate-limiting step of the early module is the reduction to mevalonate by the 3-hydroxy-3-methylglutaryl-coenzyme A (HMG-CoA) reductases HMG1. The protein is Acetyl-CoA acetyltransferase ERG10, cytosolic of Gibberella zeae (strain ATCC MYA-4620 / CBS 123657 / FGSC 9075 / NRRL 31084 / PH-1) (Wheat head blight fungus).